The primary structure comprises 83 residues: Kunitz-type serine protease inhibitor textilinin-4 (83 aa).

Positions 1–24 (MSSGGLLLLLGLLTLWEVLTPVSS) are cleaved as a signal peptide. Positions 31-81 (CELPADTGSCKGNVPRFYYNADHHQCLKFIYGGCGGNANNFKTIEECKSTC) constitute a BPTI/Kunitz inhibitor domain. 3 disulfides stabilise this stretch: C31/C81, C40/C64, and C56/C77.

It belongs to the venom Kunitz-type family. In terms of tissue distribution, expressed by the venom gland.

It is found in the secreted. In terms of biological role, serine protease inhibitor. Does not inhibit plasmin, and does not reduce blood loss in the mouse tail vein blood loss model. The polypeptide is Kunitz-type serine protease inhibitor textilinin-4 (Pseudonaja textilis textilis (Eastern brown snake)).